We begin with the raw amino-acid sequence, 445 residues long: Probable carboxypeptidase UREG_07869 (445 aa).

Residues 1 to 17 (MKSLILTTLALLPLVSC) form the signal peptide. D165 contributes to the Zn(2+) binding site. Residue E197 is the Proton acceptor of the active site. E198 is a binding site for Zn(2+).

The protein belongs to the peptidase M20A family. Requires Zn(2+) as cofactor.

The protein resides in the secreted. The polypeptide is Probable carboxypeptidase UREG_07869 (Uncinocarpus reesii (strain UAMH 1704)).